Here is a 499-residue protein sequence, read N- to C-terminus: MKIQVMKDQIKEIMADAIVIGIYEGTKSLNDNLKSMDLQLDGIITEMISSEAFKGKEGETLVIYSLGRIPAKKIMLLGLGKETDLKEDTIRRLTAKVVREAEAMKAKVVAMTAIGLDRGIAPELVGQCMMEGADLAAYKFDKYKTTDRNSGEGVQELYLLNEEESINKDLEKGFQTGAKLAQGTIIARNLVNEPSNVLTPTAMADKAIEIANNHGLEISILEKEDMEKLGMGSFLGVTKGSEEPPKLIAIKYFGNKEDEEIIGLVGKGLTFDSGGISLKPGAGMDAMKSDMGGAAAVLGAMDVIGALKPKVNVIAIVGACENMPSGKAYKPGDILTSMNGKTIEILNTDAEGRLVLIDCITYALKQGATRIVDLATLTGACIVALGHVTTALVSNDDDFVQQMYLAAERAGEKVWQLPSFPEYKELIKSDIADLKNVGDKGAGTITAGLFLGEFVEGRPWIHMDIAGTAMALGTKGYYAKGGSGVGVRTLYHLVKSMEK.

Residues Lys267 and Asp272 each contribute to the Mn(2+) site. Lys279 is an active-site residue. Residues Asp290, Asp349, and Glu351 each coordinate Mn(2+). The active site involves Arg353.

The protein belongs to the peptidase M17 family. Mn(2+) is required as a cofactor.

It is found in the cytoplasm. It catalyses the reaction Release of an N-terminal amino acid, Xaa-|-Yaa-, in which Xaa is preferably Leu, but may be other amino acids including Pro although not Arg or Lys, and Yaa may be Pro. Amino acid amides and methyl esters are also readily hydrolyzed, but rates on arylamides are exceedingly low.. The catalysed reaction is Release of an N-terminal amino acid, preferentially leucine, but not glutamic or aspartic acids.. Its function is as follows. Presumably involved in the processing and regular turnover of intracellular proteins. Catalyzes the removal of unsubstituted N-terminal amino acids from various peptides. The protein is Probable cytosol aminopeptidase of Alkaliphilus oremlandii (strain OhILAs) (Clostridium oremlandii (strain OhILAs)).